A 60-amino-acid polypeptide reads, in one-letter code: Large ribosomal subunit protein bL32 (60 aa).

A disordered region spans residues 1-60 (MAVQQNKKSPSKRGMHRSHDFLVNPATAIEPNTGETHLRHHISPNGFYRGRKVLKTKADE). The span at 49-60 (RGRKVLKTKADE) shows a compositional bias: basic residues.

The protein belongs to the bacterial ribosomal protein bL32 family.

The chain is Large ribosomal subunit protein bL32 from Bordetella bronchiseptica (strain ATCC BAA-588 / NCTC 13252 / RB50) (Alcaligenes bronchisepticus).